The primary structure comprises 417 residues: Lysosome-associated membrane glycoprotein 1 (417 aa).

Positions 1–28 are cleaved as a signal peptide; that stretch reads MAAPGSARRPLLLLLLLLLLGLMHCASA. The first lumenal domain stretch occupies residues 29 to 194; the sequence is AMFMVKNGNG…SRGETRCEQD (166 aa). Residues 29–382 are Lumenal-facing; sequence AMFMVKNGNG…EECLLDENSM (354 aa). 2 N-linked (GlcNAc...) asparagine glycosylation sites follow: Asn-37 and Asn-45. An intrachain disulfide couples Cys-41 to Cys-80. N-linked (GlcNAc...) (polylactosaminoglycan) asparagine glycosylation is present at Asn-62. N-linked (GlcNAc...) asparagine glycans are attached at residues Asn-76, Asn-84, Asn-103, and Asn-107. Residues Asn-121 and Asn-130 are each glycosylated (N-linked (GlcNAc...) (polylactosaminoglycan) asparagine). Cys-155 and Cys-191 form a disulfide bridge. N-linked (GlcNAc...) asparagine glycans are attached at residues Asn-165 and Asn-181. Positions 184 to 221 are disordered; it reads FSRGETRCEQDRPSPTTAPPAPPSPSPSPVPKSPSVDK. The hinge stretch occupies residues 195–227; sequence RPSPTTAPPAPPSPSPSPVPKSPSVDKYNVSGT. Ser-197 is a glycosylation site (O-linked (GalNAc...) serine; partial). Residues Thr-199 and Thr-200 are each glycosylated (O-linked (GalNAc...) threonine). Residues 199 to 215 are compositionally biased toward pro residues; it reads TTAPPAPPSPSPSPVPK. Ser-207, Ser-209, and Ser-211 each carry an O-linked (GalNAc...) serine glycan. Asn-223 and Asn-228 each carry an N-linked (GlcNAc...) (polylactosaminoglycan) asparagine glycan. The tract at residues 228–382 is second lumenal domain; sequence NGTCLLASMG…EECLLDENSM (155 aa). Residues Cys-231 and Cys-269 are joined by a disulfide bond. N-linked (GlcNAc...) asparagine glycosylation is found at Asn-241, Asn-249, Asn-261, Asn-293, and Asn-322. A disulfide bond links Cys-338 and Cys-375. Residues 383–410 traverse the membrane as a helical segment; that stretch reads LIPIAVGGALAGLVLIVLIAYLVGRKRS. At 411–417 the chain is on the cytoplasmic side; that stretch reads HAGYQTI.

Belongs to the LAMP family. Interacts with ABCB9; this interaction strongly stabilizes ABCB9 and protects ABCB9 against lysosomal degradation. Interacts with FURIN. Interacts with TMEM175; inhibiting the proton channel activity of TMEM175. In terms of assembly, (Microbial infection) Interacts with Lassa virus protein glycoprotein. As to quaternary structure, (Microbial infection) Interacts with mumps virus protein F; this interaction promotes protein F cleavage by FURIN. O- and N-glycosylated; some of the 18 N-linked glycans are polylactosaminoglycans. In terms of processing, (Microbial infection) The glycosylation of Asn-76 is essential for Lassa virus entry into cells.

It localises to the lysosome membrane. It is found in the endosome membrane. Its subcellular location is the late endosome membrane. The protein resides in the cell membrane. The protein localises to the cytolytic granule membrane. Functionally, lysosomal membrane glycoprotein which plays an important role in lysosome biogenesis, lysosomal pH regulation, autophagy and cholesterol homeostasis. Acts as an important regulator of lysosomal lumen pH regulation by acting as a direct inhibitor of the proton channel TMEM175, facilitating lysosomal acidification for optimal hydrolase activity. Also plays an important role in NK-cells cytotoxicity. Mechanistically, participates in cytotoxic granule movement to the cell surface and perforin trafficking to the lytic granule. In addition, protects NK-cells from degranulation-associated damage induced by their own cytotoxic granule content. Presents carbohydrate ligands to selectins. In terms of biological role, (Microbial infection) Acts as a receptor for Lassa virus glycoprotein. Also promotes fusion of the virus with host membrane in less acidic endosomes. (Microbial infection) Supports the FURIN-mediated cleavage of mumps virus fusion protein F by interacting with both FURIN and the unprocessed form but not the processed form of the viral protein F. This chain is Lysosome-associated membrane glycoprotein 1, found in Homo sapiens (Human).